Consider the following 248-residue polypeptide: 14-3-3 protein gamma-2 (248 aa).

It belongs to the 14-3-3 family. Homodimer, and heterodimer with other family members. As to expression, expressed in brain, gill, heart, intestine, kidney, liver, ovary, skeletal muscle, spleen and testis.

It is found in the cytoplasm. Adapter protein implicated in the regulation of a large spectrum of both general and specialized signaling pathways. Binds to a large number of partners, usually by recognition of a phosphoserine or phosphothreonine motif. Binding generally results in the modulation of the activity of the binding partner. The polypeptide is 14-3-3 protein gamma-2 (Oncorhynchus mykiss (Rainbow trout)).